Consider the following 263-residue polypeptide: Diphthine synthase (263 aa).

S-adenosyl-L-methionine is bound by residues Leu-9, Asp-84, Met-87, 112-113 (SI), Leu-164, Ala-207, and His-232.

The protein belongs to the diphthine synthase family. Homodimer.

The enzyme catalyses 2-[(3S)-amino-3-carboxypropyl]-L-histidyl-[translation elongation factor 2] + 3 S-adenosyl-L-methionine = diphthine-[translation elongation factor 2] + 3 S-adenosyl-L-homocysteine + 3 H(+). Its pathway is protein modification; peptidyl-diphthamide biosynthesis. S-adenosyl-L-methionine-dependent methyltransferase that catalyzes the trimethylation of the amino group of the modified target histidine residue in translation elongation factor 2 (EF-2), to form an intermediate called diphthine. The three successive methylation reactions represent the second step of diphthamide biosynthesis. The polypeptide is Diphthine synthase (Methanosphaera stadtmanae (strain ATCC 43021 / DSM 3091 / JCM 11832 / MCB-3)).